The primary structure comprises 157 residues: Protein snakeskin (157 aa).

The Cytoplasmic portion of the chain corresponds to 2–6 (VSVQT). Residues 7 to 27 (IATIVVKTFKIVLNIIILVLY) form a helical membrane-spanning segment. At 28-53 (RTGYNGEFLGVGGTWNLNEEKNPDAE) the chain is on the extracellular side. The chain crosses the membrane as a helical span at residues 54-74 (IVASGVIVGYLIYTLVQIVTF). The Cytoplasmic segment spans residues 75 to 87 (LFGTTEHKRALSE). Residues 88–108 (IVMNFVGVFLWIAVGAVALHY) form a helical membrane-spanning segment. Residues 109-130 (WGGYQGEHQFQFVFAEKQVGLA) lie on the Extracellular side of the membrane. The chain crosses the membrane as a helical span at residues 131–151 (VGALCVINGAIYLLDTALSVI). Residues 152 to 157 (HFTKEM) are Cytoplasmic-facing.

As to expression, expressed in midgut epithelium (at protein level).

The protein resides in the apicolateral cell membrane. It is found in the cell junction. Its subcellular location is the septate junction. Required for assembly of smooth septate junctions (sSJs). May be important for barrier function of the midgut epithelium. The sequence is that of Protein snakeskin from Bombyx mori (Silk moth).